We begin with the raw amino-acid sequence, 143 residues long: Putative mediator of RNA polymerase II transcription subunit 11 (143 aa).

The stretch at Ile97 to Asp143 forms a coiled coil. Positions Glu109–Asp143 are disordered. Basic and acidic residues predominate over residues Asn111–Gln136.

Belongs to the Mediator complex subunit 11 family. Component of the Mediator complex.

Its subcellular location is the nucleus. Functionally, component of the Mediator complex, a coactivator involved in the regulated transcription of nearly all RNA polymerase II-dependent genes. Mediator functions as a bridge to convey information from gene-specific regulatory proteins to the basal RNA polymerase II transcription machinery. Mediator is recruited to promoters by direct interactions with regulatory proteins and serves as a scaffold for the assembly of a functional pre-initiation complex with RNA polymerase II and the general transcription factors. The chain is Putative mediator of RNA polymerase II transcription subunit 11 (med11) from Dictyostelium discoideum (Social amoeba).